We begin with the raw amino-acid sequence, 64 residues long: Disintegrin lebein-1-beta (64 aa).

Positions 1 to 64 (NSGNPCCDPV…SDCPRNPYKD (64 aa)) constitute a Disintegrin domain. Intrachain disulfides connect C6/C29, C20/C26, C25/C50, and C38/C57. A Cell attachment site motif is present at residues 42–44 (RGD).

The protein belongs to the disintegrin family. Dimeric disintegrin subfamily. As to quaternary structure, heterodimer with subunit alpha; disulfide-linked. Expressed by the venom gland.

The protein resides in the secreted. In terms of biological role, strongly inhibits ADP-induced platelet aggregation on human platelet-rich plasma. Also avidly binds to the laminin-binding beta-1 integrins (alpha-3/beta-1, alpha-6/beta-1, and alpha-7/beta-1) in an RGD-independent manner. In Macrovipera lebetinus (Levantine viper), this protein is Disintegrin lebein-1-beta.